The following is a 70-amino-acid chain: Spore germination protein-like protein YpzD (70 aa).

Belongs to the GerPA/GerPF family.

The polypeptide is Spore germination protein-like protein YpzD (ypzD) (Bacillus subtilis (strain 168)).